The chain runs to 1600 residues: MNKAPQPTGPPPARSPGLPQPAFPPGQTAPVVFSTPQATQMNTPSQPRQGGFRSLQHFYPSRAQPPSSAASRVQSAAPARPGPAPHVYPAGSQVMMIPSQISYSASQGAYYIPGQGRSTYVVPTQQYPVQPGAPGFYPGASPTEFGTYAGAYYPAQGVQQFPASVAPAPVLMNQPPQIAPKRERKTIRIRDPNQGGKDITEEIMSGARTASTPTPPQTGGSLEPQPNGESPQVAVIIRPDDRSQGAAIGGRPGLPGPEHSPGTESQPSSPSPTPSPPPILEPGSESNLGVLSIPGDTMTTGMIPMSVEESTPISCETGEPYCLSPEPTLAEPILEVEVTLSKPIPESEFSSSPLQVSTALVPHKVETHEPNGVIPSEDLEPEVESSTEPAPPPLSPCASESLVPIAPTAQPEELLNGAPSPPAVDLSPVSEPEEQAKKVSSAALASILSPAPPVAPSDTSPAQEEEMEEDDDDEEGGEAESEKGGEDVPLDSTPVPAQLSQNLEVAAATQVAVSVPKRRRKIKELNKKEAVGDLLDAFKEVDPAVPEVENQPPTGSNPSPESEGSMVPTQPEETEETWDSKEDKIHNAENIQPGEQKYEYKSDQWKPLNLEEKKRYDREFLLGFQFIFASMQKPEGLPHITDVVLDKANKTPLRQLDPSRLPGINCGPDFTPSFANLGRPALSNRGPPRGGPGGELPRGPAGLGPRRSQQGPRKETRKIISSVIMTEDIKLNKAEKAWKPSSKRTAADKDRGEEDADGSKTQDLFRRVRSILNKLTPQMFQQLMKQVTQLAIDTEERLKGVIDLIFEKAISEPNFSVAYANMCRCLMALKVPTTEKPTVTVNFRKLLLNRCQKEFEKDKDDDEVFEKKQKEMDEAATAEERGRLKEELEEARDIARRRSLGNIKFIGELFKLKMLTEAIMHDCVVKLLKNHDEESLECLCRLLTTIGKDLDFAKAKPRMDQYFNQMEKIIKEKKTSSRIRFMLQDVLDLRQSNWVPRRGDQGPKTIDQIHKEAEMEEHREHIKVQQLMAKGSDKRRGGPPGPPINRGLPLVDDGGWNTVPISKGSRPIDTSRLTKITKPGSIDSNNQLFAPGGRLSWGKGSSGGSGAKPSDTASEATRPATLNRFSALQQTLPAENTDNRRVVQRSSLSRERGEKAGDRGDRLERSERGGDRGDRLDRARTPATKRSFSKEVEERSRERPSQPEGLRKAASLTEDRGRDPVKREATLPPVSPPKAALSVDEVEKKSKAIIEEYLHLNDMKEAVQCVQELASPSLLFIFVRLGIESTLERSTIAREHMGRLLHQLLCAGHLSTAQYYQGLYETLELAEDMEIDIPHVWLYLAELITPILQEDGVPMGELFREITKPLRPMGKATSLLLEILGLLCKSMGPKKVGMLWREAGLSWREFLAEGQDVGSFVAEKKVEYTLGEESEAPGQRTLAFEELRRQLEKLLKDGGSNQRVFDWIDANLNEQQIASNTLVRALMTTVCYSAIIFETPLRVDVQVLKVRARLLQKYLCDEQKELQALYALQALVVTLEQPANLLRMFFDALYDEDVVKEDAFYSWESSKDPAEQQGKGVALKSVTAFFNWLREAEDEESDHN.

The interval 1–88 (MNKAPQPTGP…ARPGPAPHVY (88 aa)) is disordered. The segment covering 7–24 (PTGPPPARSPGLPQPAFP) has biased composition (pro residues). Phosphoserine is present on S15. Over residues 34–48 (STPQATQMNTPSQPR) the composition is skewed to polar residues. The span at 60–79 (PSRAQPPSSAASRVQSAAPA) shows a compositional bias: low complexity. Omega-N-methylarginine occurs at positions 80 and 117. 5 disordered regions span residues 173-230 (NQPP…NGES), 243-326 (SQGA…LSPE), 366-501 (ETHE…QLSQ), 507-526 (AATQ…KELN), and 541-606 (VDPA…DQWK). The PABPC1-binding stretch occupies residues 179 to 207 (APKRERKTIRIRDPNQGGKDITEEIMSGA). Residues 208 to 220 (RTASTPTPPQTGG) are compositionally biased toward polar residues. T214 is modified (phosphothreonine). The residue at position 230 (S230) is a Phosphoserine. Positions 269–280 (SPSPTPSPPPIL) are enriched in pro residues. Phosphoserine is present on S324. The segment covering 438–449 (KVSSAALASILS) has biased composition (low complexity). A compositionally biased stretch (acidic residues) spans 463-479 (QEEEMEEDDDDEEGGEA). Residues 551-562 (QPPTGSNPSPES) show a composition bias toward polar residues. Basic and acidic residues-rich tracts occupy residues 578-587 (WDSKEDKIHN) and 596-606 (QKYEYKSDQWK). The residue at position 606 (K606) is an N6-acetyllysine. An EIF4E-binding region spans residues 611–622 (EEKKRYDREFLL). Phosphothreonine is present on T651. Disordered regions lie at residues 667–719 (GPDF…TRKI) and 734–760 (AEKA…DGSK). Residues 686–1089 (GPPRGGPGGE…GSIDSNNQLF (404 aa)) form an eIF3/EIF4A-binding region. 2 positions are modified to omega-N-methylarginine: R689 and R698. Residues 697-707 (PRGPAGLGPRR) are compositionally biased toward low complexity. Positions 745–760 (TAADKDRGEEDADGSK) are enriched in basic and acidic residues. One can recognise an MIF4G domain in the interval 765-993 (FRRVRSILNK…QDVLDLRQSN (229 aa)). Disordered stretches follow at residues 1029-1117 (AKGS…SEAT) and 1129-1238 (QQTL…AALS). Residue S1032 is modified to Phosphoserine. Omega-N-methylarginine is present on residues R1036 and R1046. A phosphoserine mark is found at S1081 and S1096. An N6-acetyllysine modification is found at K1099. Phosphoserine occurs at positions 1147 and 1149. Basic and acidic residues predominate over residues 1148-1180 (LSRERGEKAGDRGDRLERSERGGDRGDRLDRAR). A Phosphoserine; by PKC/PRKCA modification is found at S1187. Residues 1188–1225 (FSKEVEERSRERPSQPEGLRKAASLTEDRGRDPVKREA) show a composition bias toward basic and acidic residues. Phosphoserine is present on residues S1189, S1196, and S1211. Position 1213 is a phosphothreonine (T1213). Phosphoserine is present on residues S1231 and S1238. The region spanning 1241-1363 (EVEKKSKAII…PMGELFREIT (123 aa)) is the MI domain. Residues 1429–1599 (ESEAPGQRTL…REAEDEESDH (171 aa)) enclose the W2 domain. Positions 1450–1600 (LLKDGGSNQR…EAEDEESDHN (151 aa)) are EIF4A-binding. Residues 1585–1600 (FFNWLREAEDEESDHN) are necessary but not sufficient for MKNK1-binding. S1597 bears the Phosphoserine mark.

The protein belongs to the eukaryotic initiation factor 4G family. In terms of assembly, eIF4F is a multi-subunit complex, the composition of which varies with external and internal environmental conditions. It is composed of at least EIF4A, EIF4E (cap-binding) and EIF4G1/EIF4G3. Interacts with eIF3 complex, mutually exclusive with EIF4A1 or EIF4A2, EIF4E and through its N-terminus with PABPC1. Interacts with EIF4E or with EIF1 (mutually exclusive) through a common binding site. Interacts through its C-terminus with the serine/threonine kinases MKNK1, and with MKNK2. Appears to act as a scaffold protein, holding these enzymes in place to phosphorylate EIF4E. Non-phosphorylated EIF4EBP1 competes with EIF4G1/EIF4G3 to interact with EIF4E; insulin stimulated MAP-kinase (MAPK1 and MAPK3) phosphorylation of EIF4EBP1 causes dissociation of the complex allowing EIF4G1/EIF4G3 to bind and consequent initiation of translation. EIF4G1/EIF4G3 interacts with PABPC1 to bring about circularization of the mRNA. Interacts with EIF4E3. Interacts with CIRBP and MIF4GD. Interacts with RBM4. Interacts with HNRNPD/AUF1; the interaction requires RNA. Interacts with DDX3X; the interaction requires RNA. Interacts with DAZAP2. As to quaternary structure, (Microbial infection) Interacts with murine norovirus viral genome-linked protein (via C-terminus); this interaction plays a role in translation of viral proteins. Post-translationally, phosphorylated at multiple sites in vivo. Phosphorylation at Ser-1187 by PRKCA induces binding to MKNK1.

The protein localises to the cytoplasm. The protein resides in the nucleus. Its subcellular location is the stress granule. Its function is as follows. Component of the protein complex eIF4F, which is involved in the recognition of the mRNA cap, ATP-dependent unwinding of 5'-terminal secondary structure and recruitment of mRNA to the ribosome. Exists in two complexes, either with EIF1 or with EIF4E (mutually exclusive). Together with EIF1, is required for leaky scanning, in particular for avoiding cap-proximal start codon. Together with EIF4E, antagonizes the scanning promoted by EIF1-EIF4G1 and locates the start codon (through a TISU element) without scanning. As a member of the eIF4F complex, required for endoplasmic reticulum stress-induced ATF4 mRNA translation. The protein is Eukaryotic translation initiation factor 4 gamma 1 (Eif4g1) of Mus musculus (Mouse).